Reading from the N-terminus, the 64-residue chain is Small hydrophobic protein (64 aa).

The Intravirion portion of the chain corresponds to 1-20 (MENTSITIEFSSKFWPYFTL). An interaction with host BCAP31 region spans residues 6–15 (ITIEFSSKFW). The helical; Signal-anchor for type II membrane protein transmembrane segment at 21–44 (IHMITTIISLLIIISIMIAILNKL) threads the bilayer. The interaction with small-molecule inhibitor stretch occupies residues 38-43 (IAILNK). The Virion surface portion of the chain corresponds to 45 to 64 (CEYNVFHNKTFELPRARVNT). N52 carries N-linked (GlcNAc...) asparagine; by host glycosylation.

The protein belongs to the orthopneumovirus small hydrophobic protein family. As to quaternary structure, homopentamer forming a funnel-like pore. Interacts with glycoprotein G; this interaction occurs on the surface of virion particles and infected cells. Interacts with host BCAP31 (via C-terminus); this interaction is direct. Four species of SH have been detected in infected cell cytoplasm: a 7.5 kDa non-glycosylated form (SH0), a 13-15 kDa form that contains one or two N-linked carbohydrate side chains of the high-mannose type (SHg), a 21-30 kDa polylactosaminoglycan-modified form of the protein (SHp), and the isoform generated by alternative translational initiation. Of these different forms, SH0 is by far the most abundant protein detected during virus infection. In terms of processing, tyrosine phosphorylated.

Its subcellular location is the virion membrane. The protein resides in the host cell membrane. The protein localises to the host Golgi apparatus membrane. It localises to the host endoplasmic reticulum membrane. Channel activity is inhibited by copper. Also inhibited by small-molecule pyronin B. Functionally, viroporin that forms a homopentameric ion channel displaying low ion selectivity. May play a role in virus morphogenesis and pathogenicity at various stages of the viral life cycle. Accumulates at the membrane of the Golgi apparatus in infected cells and may facilitate virus release by modifying the secretory pathway. May enhance host membrane permeability and disrupt cellular ion homeostasis, which can be sensed as damage-associated molecular patterns/danger signals, triggering NLRP3 inflammasome activation and inflammatory immune response. Also inhibits host TNFA-mediated signaling pathway and may delay apoptosis, allowing time for the virus to replicate. This is Small hydrophobic protein from Homo sapiens (Human).